The primary structure comprises 239 residues: DNA repair protein RecO (239 aa).

Belongs to the RecO family.

Its function is as follows. Involved in DNA repair and RecF pathway recombination. In Christiangramia forsetii (strain DSM 17595 / CGMCC 1.15422 / KT0803) (Gramella forsetii), this protein is DNA repair protein RecO.